A 151-amino-acid chain; its full sequence is uncharacterized protein (151 aa).

To M.jannaschii MJ1244 and MJ1245.

This is an uncharacterized protein from Methanothermobacter thermautotrophicus (strain ATCC 29096 / DSM 1053 / JCM 10044 / NBRC 100330 / Delta H) (Methanobacterium thermoautotrophicum).